We begin with the raw amino-acid sequence, 191 residues long: Large ribosomal subunit protein uL5 (191 aa).

It belongs to the universal ribosomal protein uL5 family. In terms of assembly, part of the 50S ribosomal subunit; part of the 5S rRNA/L5/L18/L25 subcomplex. Contacts the 5S rRNA and the P site tRNA. Forms a bridge to the 30S subunit in the 70S ribosome.

Functionally, this is one of the proteins that bind and probably mediate the attachment of the 5S RNA into the large ribosomal subunit, where it forms part of the central protuberance. In the 70S ribosome it contacts protein S13 of the 30S subunit (bridge B1b), connecting the 2 subunits; this bridge is implicated in subunit movement. Contacts the P site tRNA; the 5S rRNA and some of its associated proteins might help stabilize positioning of ribosome-bound tRNAs. This is Large ribosomal subunit protein uL5 from Corynebacterium glutamicum (strain R).